Consider the following 431-residue polypeptide: Enolase (431 aa).

Residue Q168 participates in (2R)-2-phosphoglycerate binding. Residue E210 is the Proton donor of the active site. Positions 247, 291, and 318 each coordinate Mg(2+). (2R)-2-phosphoglycerate is bound by residues K343, R372, S373, and K394. K343 (proton acceptor) is an active-site residue.

This sequence belongs to the enolase family. Component of the RNA degradosome, a multiprotein complex involved in RNA processing and mRNA degradation. Requires Mg(2+) as cofactor.

Its subcellular location is the cytoplasm. The protein resides in the secreted. The protein localises to the cell surface. The catalysed reaction is (2R)-2-phosphoglycerate = phosphoenolpyruvate + H2O. It functions in the pathway carbohydrate degradation; glycolysis; pyruvate from D-glyceraldehyde 3-phosphate: step 4/5. In terms of biological role, catalyzes the reversible conversion of 2-phosphoglycerate (2-PG) into phosphoenolpyruvate (PEP). It is essential for the degradation of carbohydrates via glycolysis. The chain is Enolase from Acinetobacter baylyi (strain ATCC 33305 / BD413 / ADP1).